The primary structure comprises 295 residues: 33 kDa chaperonin (295 aa).

2 cysteine pairs are disulfide-bonded: C230-C232 and C264-C267.

The protein belongs to the HSP33 family. In terms of processing, under oxidizing conditions two disulfide bonds are formed involving the reactive cysteines. Under reducing conditions zinc is bound to the reactive cysteines and the protein is inactive.

It is found in the cytoplasm. Its function is as follows. Redox regulated molecular chaperone. Protects both thermally unfolding and oxidatively damaged proteins from irreversible aggregation. Plays an important role in the bacterial defense system toward oxidative stress. The polypeptide is 33 kDa chaperonin (Ectopseudomonas mendocina (strain ymp) (Pseudomonas mendocina)).